A 102-amino-acid polypeptide reads, in one-letter code: RNA-binding protein Hfq (102 aa).

The Sm domain occupies 9–68 (DPFLNALRRERVPVSIYLVNGIKLQGQIESFDQFVILLKNTVSQMVYKHAISTVVPSRPV). Residues 63 to 102 (VPSRPVSHHSNNAGGSTSSNYHHGSSAQNTSAQQDSEENE) form a disordered region. The segment covering 70–96 (HHSNNAGGSTSSNYHHGSSAQNTSAQQ) has biased composition (polar residues).

Belongs to the Hfq family. As to quaternary structure, homohexamer.

RNA chaperone that binds small regulatory RNA (sRNAs) and mRNAs to facilitate mRNA translational regulation in response to envelope stress, environmental stress and changes in metabolite concentrations. Also binds with high specificity to tRNAs. This is RNA-binding protein Hfq from Escherichia coli O17:K52:H18 (strain UMN026 / ExPEC).